Reading from the N-terminus, the 510-residue chain is Proline--tRNA ligase (510 aa).

It belongs to the class-II aminoacyl-tRNA synthetase family. ProS type 3 subfamily. As to quaternary structure, homodimer.

Its subcellular location is the cytoplasm. It carries out the reaction tRNA(Pro) + L-proline + ATP = L-prolyl-tRNA(Pro) + AMP + diphosphate. In terms of biological role, catalyzes the attachment of proline to tRNA(Pro) in a two-step reaction: proline is first activated by ATP to form Pro-AMP and then transferred to the acceptor end of tRNA(Pro). In Sphingomonas elodea, this protein is Proline--tRNA ligase.